Here is a 316-residue protein sequence, read N- to C-terminus: Transaldolase (316 aa).

The active-site Schiff-base intermediate with substrate is the Lys-132.

This sequence belongs to the transaldolase family. Type 1 subfamily.

Its subcellular location is the cytoplasm. The catalysed reaction is D-sedoheptulose 7-phosphate + D-glyceraldehyde 3-phosphate = D-erythrose 4-phosphate + beta-D-fructose 6-phosphate. It functions in the pathway carbohydrate degradation; pentose phosphate pathway; D-glyceraldehyde 3-phosphate and beta-D-fructose 6-phosphate from D-ribose 5-phosphate and D-xylulose 5-phosphate (non-oxidative stage): step 2/3. Its function is as follows. Transaldolase is important for the balance of metabolites in the pentose-phosphate pathway. In Methylomonas aminofaciens, this protein is Transaldolase.